A 260-amino-acid polypeptide reads, in one-letter code: Small ribosomal subunit protein uS2 (260 aa).

This sequence belongs to the universal ribosomal protein uS2 family.

This chain is Small ribosomal subunit protein uS2, found in Roseobacter denitrificans (strain ATCC 33942 / OCh 114) (Erythrobacter sp. (strain OCh 114)).